The chain runs to 626 residues: Acetolactate synthase large subunit (626 aa).

Over residues 1–13 (MNVAASQQPTPAT) the composition is skewed to polar residues. Positions 1–23 (MNVAASQQPTPATVASRGRSAAP) are disordered. Thiamine diphosphate is bound at residue E73. Residues R175, 281–302 (HGTVSAVGALQRSDLLIAIGSR), and 324–343 (DIDPAEIGKIKQVEVPIVGD) each bind FAD. Positions 416–496 (QHQMWAAQFV…IKIALINNGN (81 aa)) are thiamine pyrophosphate binding. The Mg(2+) site is built by D467 and N494.

Belongs to the TPP enzyme family. In terms of assembly, dimer of large and small chains. The cofactor is Mg(2+). Thiamine diphosphate serves as cofactor.

It carries out the reaction 2 pyruvate + H(+) = (2S)-2-acetolactate + CO2. The protein operates within amino-acid biosynthesis; L-isoleucine biosynthesis; L-isoleucine from 2-oxobutanoate: step 1/4. Its pathway is amino-acid biosynthesis; L-valine biosynthesis; L-valine from pyruvate: step 1/4. The sequence is that of Acetolactate synthase large subunit (ilvB) from Corynebacterium glutamicum (strain ATCC 13032 / DSM 20300 / JCM 1318 / BCRC 11384 / CCUG 27702 / LMG 3730 / NBRC 12168 / NCIMB 10025 / NRRL B-2784 / 534).